The following is a 274-amino-acid chain: Large ribosomal subunit protein uL2cy (274 aa).

Disordered stretches follow at residues 1-25 and 223-274; these read MAIHLYKTSTPSTRNGTVDSQVKSN and MNPV…RRSK. Residues 7 to 25 are compositionally biased toward polar residues; the sequence is KTSTPSTRNGTVDSQVKSN.

It belongs to the universal ribosomal protein uL2 family. As to quaternary structure, part of the 50S ribosomal subunit.

It localises to the plastid. Its subcellular location is the chloroplast. The chain is Large ribosomal subunit protein uL2cy (rpl2-B) from Atropa belladonna (Belladonna).